The following is an 89-amino-acid chain: Small ribosomal subunit protein uS15 (89 aa).

It belongs to the universal ribosomal protein uS15 family. As to quaternary structure, part of the 30S ribosomal subunit. Forms a bridge to the 50S subunit in the 70S ribosome, contacting the 23S rRNA.

In terms of biological role, one of the primary rRNA binding proteins, it binds directly to 16S rRNA where it helps nucleate assembly of the platform of the 30S subunit by binding and bridging several RNA helices of the 16S rRNA. Its function is as follows. Forms an intersubunit bridge (bridge B4) with the 23S rRNA of the 50S subunit in the ribosome. The sequence is that of Small ribosomal subunit protein uS15 from Buchnera aphidicola subsp. Baizongia pistaciae (strain Bp).